The chain runs to 279 residues: Protein phosphatase 1 regulatory subunit 3E (279 aa).

2 positions are modified to phosphoserine: Ser-16 and Ser-33. The tract at residues 28-87 is disordered; that stretch reads RSQRPSLEEESEEEPGEGGTRPGARSRAHVPGRGRRARSAPAGGGGARTARSRSPDTRKR. Basic residues predominate over residues 51 to 65; it reads ARSRAHVPGRGRRAR. Position 66 is a phosphoserine (Ser-66). Positions 87 to 90 match the PP1-binding motif motif; that stretch reads RVRF. In terms of domain architecture, CBM21 spans 154 to 259; sequence AARLQAQRIC…NNGGRDYALL (106 aa). The interval 176-198 is glycogen-binding motif; sequence GSARVLDLAYEKRVSVRWSADGW. The substrate-binding motif stretch occupies residues 248 to 256; it reads WDNNGGRDY.

Its function is as follows. Acts as a glycogen-targeting subunit for PP1. PP1 is involved in glycogen metabolism and contributes to the activation of glycogen synthase leading to an increase in glycogen synthesis. The polypeptide is Protein phosphatase 1 regulatory subunit 3E (Ppp1r3e) (Mus musculus (Mouse)).